Reading from the N-terminus, the 160-residue chain is Peptide methionine sulfoxide reductase MsrA (160 aa).

Cys-11 is a catalytic residue.

Belongs to the MsrA Met sulfoxide reductase family.

It catalyses the reaction L-methionyl-[protein] + [thioredoxin]-disulfide + H2O = L-methionyl-(S)-S-oxide-[protein] + [thioredoxin]-dithiol. It carries out the reaction [thioredoxin]-disulfide + L-methionine + H2O = L-methionine (S)-S-oxide + [thioredoxin]-dithiol. In terms of biological role, has an important function as a repair enzyme for proteins that have been inactivated by oxidation. Catalyzes the reversible oxidation-reduction of methionine sulfoxide in proteins to methionine. The sequence is that of Peptide methionine sulfoxide reductase MsrA from Malacoplasma penetrans (strain HF-2) (Mycoplasma penetrans).